The sequence spans 298 residues: N-acetylmuramic acid 6-phosphate etherase (298 aa).

Residues 55 to 218 (IHAQVSGGGR…STGLMIKSGK (164 aa)) form the SIS domain. Glutamate 83 functions as the Proton donor in the catalytic mechanism. Glutamate 114 is a catalytic residue.

It belongs to the GCKR-like family. MurNAc-6-P etherase subfamily. In terms of assembly, homodimer.

It carries out the reaction N-acetyl-D-muramate 6-phosphate + H2O = N-acetyl-D-glucosamine 6-phosphate + (R)-lactate. The protein operates within amino-sugar metabolism; 1,6-anhydro-N-acetylmuramate degradation. It participates in amino-sugar metabolism; N-acetylmuramate degradation. It functions in the pathway cell wall biogenesis; peptidoglycan recycling. Specifically catalyzes the cleavage of the D-lactyl ether substituent of MurNAc 6-phosphate, producing GlcNAc 6-phosphate and D-lactate. Together with AnmK, is also required for the utilization of anhydro-N-acetylmuramic acid (anhMurNAc) either imported from the medium or derived from its own cell wall murein, and thus plays a role in cell wall recycling. The polypeptide is N-acetylmuramic acid 6-phosphate etherase (Shigella flexneri serotype 5b (strain 8401)).